The following is a 182-amino-acid chain: Oligoribonuclease (182 aa).

In terms of domain architecture, Exonuclease spans 8–171 (LIWIDLEMTG…DDIRESIKEL (164 aa)). Tyr-129 is a catalytic residue.

The protein belongs to the oligoribonuclease family.

The protein localises to the cytoplasm. In terms of biological role, 3'-to-5' exoribonuclease specific for small oligoribonucleotides. The sequence is that of Oligoribonuclease from Actinobacillus succinogenes (strain ATCC 55618 / DSM 22257 / CCUG 43843 / 130Z).